The chain runs to 75 residues: Small capsomere-interacting protein (75 aa).

The protein belongs to the herpesviridae small capsomere-interacting protein family. Interacts with the major capsid protein/MCP.

The protein resides in the virion. The protein localises to the host nucleus. Its function is as follows. Participates in the assembly of the infectious particles by decorating the outer surface of the capsid shell and thus forming a layer between the capsid and the tegument. Complexes composed of the capsid protein VP5 and UL48A assemble together in the host cytoplasm and are translocated to the nucleus, where they accumulate and participate in capsid assembly. In terms of biological role, participates in the assembly of the infectious particles by decorating the outer surface of the capsid shell and thus forming a layer between the capsid and the tegument. Complexes composed of the major capsid protein and small capsomere-interacting protein/SCP assemble together in the host cytoplasm and are translocated to the nucleus, where they accumulate and participate in capsid assembly. The chain is Small capsomere-interacting protein from Homo sapiens (Human).